The following is a 218-amino-acid chain: Serine/threonine-protein phosphatase 2 (218 aa).

Residues Asp22, His24, Asp51, and Asn77 each contribute to the Mn(2+) site. Residue His78 is the Proton donor of the active site. Residue His187 participates in Mn(2+) binding.

It belongs to the PPP phosphatase family. It depends on Mn(2+) as a cofactor.

It carries out the reaction O-phospho-L-seryl-[protein] + H2O = L-seryl-[protein] + phosphate. It catalyses the reaction O-phospho-L-threonyl-[protein] + H2O = L-threonyl-[protein] + phosphate. In terms of biological role, has been shown, in vitro, to act on Ser, Thr and Tyr-phosphorylated substrates. In Escherichia coli (strain K12), this protein is Serine/threonine-protein phosphatase 2 (pphB).